The primary structure comprises 602 residues: Sodium- and chloride-dependent GABA transporter 2 (602 aa).

Residues 1 to 13 (MDSRVSGTTSNGE) show a composition bias toward polar residues. Residues 1-22 (MDSRVSGTTSNGETKPVYPVME) are disordered. The Cytoplasmic portion of the chain corresponds to 1–40 (MDSRVSGTTSNGETKPVYPVMEKKEEDGTLERGHWNNKME). 3 consecutive transmembrane segments (helical) span residues 41–61 (FVLSVAGEIIGLGNVWRFPYL), 68–88 (GAFFIPYLVFLFTCGIPVFLL), and 121–141 (IVILLNVYYIIVLAWALFYLF). The Extracellular segment spans residues 142–206 (SSFTIDLPWG…GIQHLGALRW (65 aa)). A disulfide bond links Cys153 and Cys162. Asn173 carries an N-linked (GlcNAc...) asparagine glycan. The next 2 membrane-spanning stretches (helical) occupy residues 207-227 (ELALCLLLAWVICYFCIWKGV) and 233-253 (VVYFTATFPYLMLVVLLIRGV). Asn269 carries N-linked (GlcNAc...) asparagine glycosylation. 7 helical membrane passes run 282-302 (AGTQIFFSFAICLGCLTALGS), 319-339 (FLNSGTSFVAGFAIFSILGFM), 366-386 (VVMLPFSPLWACCFFFMVVLL), 418-438 (VLILGVSVVSFLVGLIMLTEG), 453-473 (GMCLLFVAIFESLCVAWVYGA), 490-510 (PLIKYCWLFLTPAVCTATFLF), and 528-548 (WWGDALGWLLALSSMVCIPAW). The Cytoplasmic segment spans residues 549–602 (SLYRLGTLKGPFRERIRQLMCPAEDLPQRNPAGPSAPATPRTSLLRLTELESHC). A Phosphothreonine modification is found at Thr587. Ser591 is subject to Phosphoserine.

This sequence belongs to the sodium:neurotransmitter symporter (SNF) (TC 2.A.22) family. SLC6A13 subfamily. In terms of tissue distribution, expressed in brain, kidney, lung, liver and testis.

The protein resides in the cell membrane. It localises to the basolateral cell membrane. The catalysed reaction is 4-aminobutanoate(out) + chloride(out) + 2 Na(+)(out) = 4-aminobutanoate(in) + chloride(in) + 2 Na(+)(in). It catalyses the reaction taurine(out) + chloride(out) + 2 Na(+)(out) = taurine(in) + chloride(in) + 2 Na(+)(in). It carries out the reaction beta-alanine(out) + chloride(out) + 2 Na(+)(out) = beta-alanine(in) + chloride(in) + 2 Na(+)(in). The enzyme catalyses hypotaurine(out) + chloride(out) + 2 Na(+)(out) = hypotaurine(in) + chloride(in) + 2 Na(+)(in). GABA transport is inhibited by beta-alanine, 2,3-diaminopropionic acid and SNAP-5114. Mediates sodium- and chloride-dependent transport of gamma-aminobutyric acid (GABA). Mediates transport of beta-alanine. Can also mediate transport of taurine and hypotaurine. This is Sodium- and chloride-dependent GABA transporter 2 (SLC6A13) from Homo sapiens (Human).